The chain runs to 407 residues: Tyrosine--tRNA ligase (407 aa).

Y35 is an L-tyrosine binding site. The 'HIGH' region signature appears at 40-49 (PTADSLHVGH). Residues Y168 and Q172 each contribute to the L-tyrosine site. The 'KMSKS' region motif lies at 228–232 (KMGKT). ATP is bound at residue K231. The 65-residue stretch at 341-405 (NLLVDLLVKC…RGKKNFNRIV (65 aa)) folds into the S4 RNA-binding domain.

Belongs to the class-I aminoacyl-tRNA synthetase family. TyrS type 1 subfamily. Homodimer.

It localises to the cytoplasm. The catalysed reaction is tRNA(Tyr) + L-tyrosine + ATP = L-tyrosyl-tRNA(Tyr) + AMP + diphosphate + H(+). Catalyzes the attachment of tyrosine to tRNA(Tyr) in a two-step reaction: tyrosine is first activated by ATP to form Tyr-AMP and then transferred to the acceptor end of tRNA(Tyr). The polypeptide is Tyrosine--tRNA ligase (Clostridium botulinum (strain Kyoto / Type A2)).